The chain runs to 1151 residues: Protein BREAST CANCER SUSCEPTIBILITY 2 homolog A (1151 aa).

BRCA2 repeat units follow at residues 63-97 (MPGE…EKVT), 116-150 (TAET…SDKI), 163-197 (FGVS…LEED), and 257-291 (LKVP…DPEL). The interval 408 to 427 (GFIPRGRQPGRPADQPLVDI) is disordered.

In terms of assembly, interacts with RAD51 and DMC1. Interacts with DSS1(I). Expressed in flower buds.

Involved in double-strand break repair and/or homologous recombination by mediating RAD51- and DMC1-facilitated DNA repair. Plays an essential role in both somatic and meiotic homologous recombination. Is crucial for the formation of RAD51 and DMC1 foci during male meiotic homologous recombination in prophase I. This chain is Protein BREAST CANCER SUSCEPTIBILITY 2 homolog A, found in Arabidopsis thaliana (Mouse-ear cress).